The sequence spans 633 residues: GTPase-GDP dissociation stimulator BEM4 (633 aa).

In terms of assembly, interacts with CDC42; the interaction is direct. Interacts with RHO1; the interaction is direct. Interacts with RHO2. Interacts with RHO4. Interacts with CDC11.

It is found in the nucleus. It localises to the cytoplasm. Probably acts as a GEF (guanine nucleotide exchange factor) for the Rho family of small GTP-binding proteins (G proteins) that stimulates the dissociation of GDP to enable subsequent binding of GTP. May also chaperone the processing and/or trafficking of small GTPases independently of GEF activity. Involved in the control of polarized cell growth via CDC42-mediated signaling. Involved in the control of cell-wall organization via RHO1-mediated signaling. May also function via RHO2 and RHO4. This Saccharomyces cerevisiae (strain ATCC 204508 / S288c) (Baker's yeast) protein is GTPase-GDP dissociation stimulator BEM4.